The following is a 152-amino-acid chain: Deoxyuridine 5'-triphosphate nucleotidohydrolase (152 aa).

Substrate is bound by residues 71 to 73 (RSG), Asn-84, 88 to 90 (LID), and Met-98.

It belongs to the dUTPase family. Mg(2+) is required as a cofactor.

The catalysed reaction is dUTP + H2O = dUMP + diphosphate + H(+). It participates in pyrimidine metabolism; dUMP biosynthesis; dUMP from dCTP (dUTP route): step 2/2. In terms of biological role, this enzyme is involved in nucleotide metabolism: it produces dUMP, the immediate precursor of thymidine nucleotides and it decreases the intracellular concentration of dUTP so that uracil cannot be incorporated into DNA. The polypeptide is Deoxyuridine 5'-triphosphate nucleotidohydrolase (Coxiella burnetii (strain RSA 331 / Henzerling II)).